The sequence spans 60 residues: UI (60 aa).

A compositionally biased stretch (low complexity) spans 1-14 (AAAAGDSAASDLLG). Residues 1-22 (AAAAGDSAASDLLGDNILRSED) are disordered. At Val60 the chain carries Valine amide.

It belongs to the sauvagine/corticotropin-releasing factor/urotensin I family.

The protein resides in the secreted. Functionally, urotensin is found in the teleost caudal neurosecretory system. It has a suggested role in osmoregulation and as a corticotropin-releasing factor. The non-hormonal portion of this precursor may be a urotensin binding protein, urophysin. The chain is UI from Platichthys flesus (European flounder).